Here is a 206-residue protein sequence, read N- to C-terminus: Protease (206 aa).

Catalysis depends on residues histidine 54, aspartate 71, and cysteine 122.

It belongs to the peptidase C5 family. As to quaternary structure, interacts with protease cofactor pVI-C; this interaction is necessary for protease activation.

The protein resides in the virion. Its subcellular location is the host nucleus. It carries out the reaction Cleaves proteins of the adenovirus and its host cell at two consensus sites: -Yaa-Xaa-Gly-Gly-|-Xaa- and -Yaa-Xaa-Gly-Xaa-|-Gly- (in which Yaa is Met, Ile or Leu, and Xaa is any amino acid).. Its activity is regulated as follows. Requires DNA and protease cofactor for maximal activation. Inside nascent virions, becomes partially activated by binding to the viral DNA, allowing it to cleave the cofactor that binds to the protease and fully activates it. Actin, like the viral protease cofactor, seems to act as a cofactor in the cleavage of cytokeratin 18 and of actin itself. In terms of biological role, cleaves viral precursor proteins (pTP, pIIIa, pVI, pVII, pVIII, and pX) inside newly assembled particles giving rise to mature virions. Protease complexed to its cofactor slides along the viral DNA to specifically locate and cleave the viral precursors. Mature virions have a weakened organization compared to the unmature virions, thereby facilitating subsequent uncoating. Without maturation, the particle lacks infectivity and is unable to uncoat. Late in adenovirus infection, in the cytoplasm, may participate in the cytoskeleton destruction. Cleaves host cell cytoskeletal keratins K7 and K18. The polypeptide is Protease (Homo sapiens (Human)).